A 354-amino-acid polypeptide reads, in one-letter code: Ferredoxin--NADP reductase (354 aa).

7 residues coordinate FAD: Asp-39, Gln-47, Tyr-52, Val-92, Phe-127, Asp-296, and Thr-337.

The protein belongs to the ferredoxin--NADP reductase type 2 family. In terms of assembly, homodimer. The cofactor is FAD.

The enzyme catalyses 2 reduced [2Fe-2S]-[ferredoxin] + NADP(+) + H(+) = 2 oxidized [2Fe-2S]-[ferredoxin] + NADPH. The polypeptide is Ferredoxin--NADP reductase (Albidiferax ferrireducens (strain ATCC BAA-621 / DSM 15236 / T118) (Rhodoferax ferrireducens)).